Here is a 1484-residue protein sequence, read N- to C-terminus: DNA-directed RNA polymerase subunit beta' (1484 aa).

Positions 67, 69, 82, and 85 each coordinate Zn(2+). The Mg(2+) site is built by D499, D501, and D503. Zn(2+) contacts are provided by C867, C943, C950, and C953.

Belongs to the RNA polymerase beta' chain family. In terms of assembly, the RNAP catalytic core consists of 2 alpha, 1 beta, 1 beta' and 1 omega subunit. When a sigma factor is associated with the core the holoenzyme is formed, which can initiate transcription. The cofactor is Mg(2+). It depends on Zn(2+) as a cofactor.

It catalyses the reaction RNA(n) + a ribonucleoside 5'-triphosphate = RNA(n+1) + diphosphate. Functionally, DNA-dependent RNA polymerase catalyzes the transcription of DNA into RNA using the four ribonucleoside triphosphates as substrates. This Chlorobium phaeovibrioides (strain DSM 265 / 1930) (Prosthecochloris vibrioformis (strain DSM 265)) protein is DNA-directed RNA polymerase subunit beta'.